The primary structure comprises 282 residues: MSVNHYSTDHHHTLLWQQQQHRHTTDTSETTTTATWLHDDLKESLFEKSLTPSDVGKLNRLVIPKQHAEKYFPLNAVLVSSAAADTSSSEKGMLLSFEDESGKSWRFRYSYWNSSQSYVLTKGWSRFVKDKQLDPGDVVFFQRHRSDSRRLFIGWRRRGQGSSSSVAATNSAVNTSSMGALSYHQIHATSNYSNPPSHSEYSHYGAAVATAAETHSTPSSSVVGSSRTVRLFGVNLECQMDENDGDDSVAVATTVESPDGYYGQNMYYYYSHPHNMVILTLL.

The TF-B3 DNA-binding region spans 46–159; it reads FEKSLTPSDV…RLFIGWRRRG (114 aa).

The protein resides in the nucleus. The polypeptide is B3 domain-containing protein At5g06250 (Arabidopsis thaliana (Mouse-ear cress)).